A 119-amino-acid polypeptide reads, in one-letter code: Large ribosomal subunit protein bL20 (119 aa).

The protein belongs to the bacterial ribosomal protein bL20 family.

In terms of biological role, binds directly to 23S ribosomal RNA and is necessary for the in vitro assembly process of the 50S ribosomal subunit. It is not involved in the protein synthesizing functions of that subunit. This is Large ribosomal subunit protein bL20 from Bradyrhizobium sp. (strain ORS 278).